Reading from the N-terminus, the 487-residue chain is L-carnitine dehydrogenase/betainyl-CoA thioesterase (487 aa).

The interval 1-327 (MTTAAIIGGG…DAALKPKALP (327 aa)) is L-carnitine dehydrogenase. 8–13 (GGGVIG) provides a ligand contact to NAD(+). A betainyl-CoA thioesterase region spans residues 328–487 (DLDTADLTQP…GAGSAIRKPA (160 aa)).

The protein in the N-terminal section; belongs to the 3-hydroxyacyl-CoA dehydrogenase family. L-carnitine dehydrogenase subfamily. This sequence in the C-terminal section; belongs to the betainyl-CoA thioesterase family. As to quaternary structure, homodimer.

It localises to the cytoplasm. The catalysed reaction is carnitine + NAD(+) = 3-dehydrocarnitine + NADH + H(+). It catalyses the reaction N,N,N-trimethylglycyl-CoA + H2O = glycine betaine + CoA + H(+). Its pathway is amine and polyamine metabolism; carnitine metabolism. In terms of biological role, multifunctional enzyme that catalyzes the NAD(+)-dependent oxidation of L-carnitine to 3-dehydrocarnitine and the cleavage of betainyl-CoA (N,N,N-trimethylglycyl-CoA) into glycine betaine and coenzyme A. The polypeptide is L-carnitine dehydrogenase/betainyl-CoA thioesterase (Ruegeria pomeroyi (strain ATCC 700808 / DSM 15171 / DSS-3) (Silicibacter pomeroyi)).